A 788-amino-acid polypeptide reads, in one-letter code: Serine/threonine-protein kinase MARK2 (788 aa).

Residues 1–46 (MSSARTPLPTLNERDTEQPTLGHLDSKPSSKSNMIRGRNSATSADE) are disordered. Residues 27-45 (KPSSKSNMIRGRNSATSAD) show a composition bias toward polar residues. Serine 40 bears the Phosphoserine mark. In terms of domain architecture, Protein kinase spans 53–304 (YRLLKTIGKG…LEQIMKDRWM (252 aa)). The residue at position 58 (threonine 58) is a Phosphothreonine; by autocatalysis. Residues 59–67 (IGKGNFAKV) and lysine 82 each bind ATP. Phosphoserine; by CaMK1 occurs at positions 91, 92, and 93. The active-site Proton acceptor is the aspartate 175. Position 208 is a phosphothreonine; by LKB1 and TAOK1 (threonine 208). Position 212 is a phosphoserine; by GSK3-beta (serine 212). Position 274 is a phosphoserine; by autocatalysis (serine 274). Threonine 275 carries the phosphothreonine; by autocatalysis modification. Threonine 294 bears the Phosphothreonine; by CaMK1 mark. Residues 323–362 (YKDPRRTELMVSMGYTREEIQDSLVGQRYNEVMATYLLLG) form the UBA domain. The interval 373–632 (ITLKPRPSAD…HSQGRRGASG (260 aa)) is disordered. Phosphoserine occurs at positions 376 and 409. Residues 418 to 432 (PTSNSYSKKTQSNNA) are compositionally biased toward polar residues. Residues 433-445 (ENKRPEEDRESGR) are compositionally biased toward basic and acidic residues. At serine 456 the chain carries Phosphoserine. At threonine 467 the chain carries Phosphothreonine. Over residues 467–486 (TPTPSTNSVLSTSTNRSRNS) the composition is skewed to polar residues. Phosphoserine is present on residues serine 486 and serine 493. Positions 495 to 504 (GQASIQNGKD) are enriched in polar residues. Residues 511-525 (SRASTASASAAVSAA) are compositionally biased toward low complexity. Phosphoserine occurs at positions 569, 571, and 592. Position 596 is a phosphothreonine; by PKC/PRKCZ (threonine 596). Phosphoserine occurs at positions 619 and 722. Residues 739–788 (TPGHEDFVQWEMEVCKLPRLSLNGVRFKRISGTSMAFKNIASKIANELKL) form the KA1 domain.

It belongs to the protein kinase superfamily. CAMK Ser/Thr protein kinase family. SNF1 subfamily. Homodimer. Interacts with PAK5; leading to inhibit the protein kinase activity. Interacts with MAPT/TAU. Interacts with MTCL1 isoform 1; the interaction is direct and increases MARK2 microtubule-binding ability. Interacts (when phosphorylated at Thr-596) with YWHAZ. Interacts with YWHAB, YWHAG and YWHAQ. As to quaternary structure, (Microbial infection) In case of infection, interacts with H.pylori CagA, leading to inhibit kinase activity and junctional and polarity defects. Mg(2+) serves as cofactor. In terms of processing, autophosphorylated. Phosphorylated at Thr-208 by STK11/LKB1 in complex with STE20-related adapter-alpha (STRADA) pseudo kinase and CAB39. Phosphorylation at Thr-208 by TAOK1 activates the kinase activity, leading to phosphorylation and detachment of MAPT/TAU from microtubules. Phosphorylation at Ser-212 by GSK3-beta (GSK3B) inhibits the kinase activity. Phosphorylation by CaMK1 promotes activity and is required to promote neurite outgrowth. Phosphorylation at Thr-596 by PRKCZ/aPKC in polarized epithelial cells inhibits the kinase activity and promotes binding to 14-3-3 protein YWHAZ, leading to relocation from cell membrane to cytoplasm. In terms of tissue distribution, high levels of expression in heart, brain, skeletal muscle and pancreas, lower levels observed in lung, liver and kidney.

It is found in the cell membrane. Its subcellular location is the cytoplasm. It localises to the lateral cell membrane. The protein resides in the cytoskeleton. The protein localises to the cell projection. It is found in the dendrite. It catalyses the reaction L-seryl-[protein] + ATP = O-phospho-L-seryl-[protein] + ADP + H(+). It carries out the reaction L-threonyl-[protein] + ATP = O-phospho-L-threonyl-[protein] + ADP + H(+). The enzyme catalyses L-seryl-[tau protein] + ATP = O-phospho-L-seryl-[tau protein] + ADP + H(+). The catalysed reaction is L-threonyl-[tau protein] + ATP = O-phospho-L-threonyl-[tau protein] + ADP + H(+). With respect to regulation, inhibited by PAK5; inhibition is independent of the kinase activity of PAK5. Activated by phosphorylation on Thr-208. Inhibited by phosphorylation at Ser-212 and Thr-596. Inhibited by hymenialdisine. Specifically inhibited by the H.pylori CagA peptide FPLKRHDKVDDLSK that mimics host substrates and binds to the kinase substrate-binding site. Its function is as follows. Serine/threonine-protein kinase. Involved in cell polarity and microtubule dynamics regulation. Phosphorylates CRTC2/TORC2, DCX, HDAC7, KIF13B, MAP2, MAP4 and RAB11FIP2. Phosphorylates the microtubule-associated protein MAPT/TAU. Plays a key role in cell polarity by phosphorylating the microtubule-associated proteins MAP2, MAP4 and MAPT/TAU at KXGS motifs, causing detachment from microtubules, and their disassembly. Regulates epithelial cell polarity by phosphorylating RAB11FIP2. Involved in the regulation of neuronal migration through its dual activities in regulating cellular polarity and microtubule dynamics, possibly by phosphorylating and regulating DCX. Regulates axogenesis by phosphorylating KIF13B, promoting interaction between KIF13B and 14-3-3 and inhibiting microtubule-dependent accumulation of KIF13B. Also required for neurite outgrowth and establishment of neuronal polarity. Regulates localization and activity of some histone deacetylases by mediating phosphorylation of HDAC7, promoting subsequent interaction between HDAC7 and 14-3-3 and export from the nucleus. Also acts as a positive regulator of the Wnt signaling pathway, probably by mediating phosphorylation of dishevelled proteins (DVL1, DVL2 and/or DVL3). Modulates the developmental decision to build a columnar versus a hepatic epithelial cell apparently by promoting a switch from a direct to a transcytotic mode of apical protein delivery. Essential for the asymmetric development of membrane domains of polarized epithelial cells. The chain is Serine/threonine-protein kinase MARK2 from Homo sapiens (Human).